The primary structure comprises 1770 residues: Probable outer membrane protein PmpC (1770 aa).

An N-terminal signal peptide occupies residues M1 to A20. Disordered regions lie at residues L73–N109, E264–G311, P481–D505, E611–E818, and L1271–T1329. A compositionally biased stretch (low complexity) spans S85–G97. Residues D268–S285 are compositionally biased toward polar residues. 2 stretches are compositionally biased toward low complexity: residues S294–P303 and Q496–D505. Composition is skewed to polar residues over residues T631–A675 and Q682–E703. 2 stretches are compositionally biased toward low complexity: residues E719–S748 and S762–A802. Over residues N1303 to P1319 the composition is skewed to polar residues. Residues E1477–F1770 form the Autotransporter domain.

Belongs to the PMP outer membrane protein family.

Its subcellular location is the secreted. It is found in the cell wall. It localises to the cell outer membrane. This chain is Probable outer membrane protein PmpC (pmpC), found in Chlamydia trachomatis serovar D (strain ATCC VR-885 / DSM 19411 / UW-3/Cx).